Here is a 440-residue protein sequence, read N- to C-terminus: Chromosome partition protein MukF (440 aa).

Residues 208-236 (LSETSGTLRELQDTLEAAGDKLQANLLRI) form a leucine-zipper region.

This sequence belongs to the MukF family. Interacts, and probably forms a ternary complex, with MukE and MukB via its C-terminal region. The complex formation is stimulated by calcium or magnesium. It is required for an interaction between MukE and MukB.

It is found in the cytoplasm. Its subcellular location is the nucleoid. Involved in chromosome condensation, segregation and cell cycle progression. May participate in facilitating chromosome segregation by condensation DNA from both sides of a centrally located replisome during cell division. Not required for mini-F plasmid partitioning. Probably acts via its interaction with MukB and MukE. Overexpression results in anucleate cells. It has a calcium binding activity. This chain is Chromosome partition protein MukF, found in Yersinia enterocolitica serotype O:8 / biotype 1B (strain NCTC 13174 / 8081).